The sequence spans 151 residues: UPF0178 protein YaiI (151 aa).

The protein belongs to the UPF0178 family.

This chain is UPF0178 protein YaiI, found in Salmonella arizonae (strain ATCC BAA-731 / CDC346-86 / RSK2980).